The chain runs to 276 residues: Secretagogin (276 aa).

EF-hand domains lie at L12 to K47, D105 to H140, E149 to F184, E197 to L232, and V240 to P276. 18 residues coordinate Ca(2+): D118, D120, S122, E129, D162, N164, D166, R168, D173, D210, S212, T214, E221, D254, N256, D258, K260, and E265.

Highly expressed in pancreas, in particular in pancreatic islets and pancreatic beta-cells. Detected in prostate, adrenal gland, small intestine, stomach and thyroid (at protein level).

It is found in the cytoplasm. It localises to the secreted. The protein resides in the cytoplasmic vesicle. Its subcellular location is the secretory vesicle membrane. This chain is Secretagogin (Scgn), found in Rattus norvegicus (Rat).